The primary structure comprises 317 residues: tRNA pseudouridine synthase B (317 aa).

The active-site Nucleophile is the D47.

It belongs to the pseudouridine synthase TruB family. Type 1 subfamily.

It carries out the reaction uridine(55) in tRNA = pseudouridine(55) in tRNA. In terms of biological role, responsible for synthesis of pseudouridine from uracil-55 in the psi GC loop of transfer RNAs. The sequence is that of tRNA pseudouridine synthase B from Shewanella woodyi (strain ATCC 51908 / MS32).